The following is a 130-amino-acid chain: Small ribosomal subunit protein uS8 (130 aa).

Belongs to the universal ribosomal protein uS8 family. In terms of assembly, part of the 30S ribosomal subunit.

Functionally, one of the primary rRNA binding proteins, it binds directly to 16S rRNA central domain where it helps coordinate assembly of the platform of the 30S subunit. This Caldivirga maquilingensis (strain ATCC 700844 / DSM 13496 / JCM 10307 / IC-167) protein is Small ribosomal subunit protein uS8.